The following is a 287-amino-acid chain: Very long chain fatty acid elongase 4 (287 aa).

3 helical membrane-spanning segments follow: residues 33 to 53 (ILVY…EHIM), 64 to 84 (PFVV…YSCV), and 115 to 135 (FWVF…VFLV). The HxxHH motif signature appears at 145–149 (HWYHH). The active-site Nucleophile is H148. 4 consecutive transmembrane segments (helical) span residues 150-170 (LTVA…GLWF), 172-192 (TMNY…ACGM), 199-219 (IAPF…LIVL), and 241-261 (LGLV…GKLY).

This sequence belongs to the ELO family.

It is found in the membrane. It carries out the reaction a very-long-chain acyl-CoA + malonyl-CoA + H(+) = a very-long-chain 3-oxoacyl-CoA + CO2 + CoA. In terms of biological role, involved in the synthesis of fatty acids. Elongates C16:0 and C18:0 fatty acids to C26:0, with C24:0 being the main product. In Trypanosoma cruzi (strain CL Brener), this protein is Very long chain fatty acid elongase 4.